A 526-amino-acid chain; its full sequence is Biotin carboxylase 2, chloroplastic (526 aa).

Residues 1–71 constitute a chloroplast transit peptide; that stretch reads MEATLPVCKS…GVTCRAEKIL (71 aa). ATP contacts are provided by residues lysine 181, 213–274, lysine 223, 229–230, 265–268, and histidine 273; these read ASEI…PRHI, GG, and EKYV. Residues 185-382 enclose the ATP-grasp domain; the sequence is RETMKKANVP…LIEEQIRVAM (198 aa). Lysine 302 is a hydrogencarbonate binding site. Glutamate 340 and glutamate 353 together coordinate ATP. Positions 340, 353, and 355 each coordinate Mg(2+). Residues glutamate 340, glutamate 353, and asparagine 355 each contribute to the Mn(2+) site. The hydrogencarbonate site is built by arginine 357, valine 360, and arginine 403. The active site involves arginine 357. Residue arginine 403 coordinates biotin.

In terms of assembly, acetyl-CoA carboxylase is a heterohexamer composed of biotin carboxyl carrier protein, biotin carboxylase and two subunits each of ACCase subunit alpha and ACCase plastid-coded subunit beta (accD). The cofactor is Mg(2+). Mn(2+) serves as cofactor.

Its subcellular location is the plastid. The protein localises to the chloroplast. The catalysed reaction is N(6)-biotinyl-L-lysyl-[protein] + hydrogencarbonate + ATP = N(6)-carboxybiotinyl-L-lysyl-[protein] + ADP + phosphate + H(+). Its pathway is lipid metabolism; malonyl-CoA biosynthesis; malonyl-CoA from acetyl-CoA: step 1/1. In terms of biological role, this protein is a component of the acetyl coenzyme A carboxylase complex; first, biotin carboxylase catalyzes the carboxylation of the carrier protein and then the transcarboxylase transfers the carboxyl group to form malonyl-CoA. This is Biotin carboxylase 2, chloroplastic from Populus trichocarpa (Western balsam poplar).